The sequence spans 102 residues: Thioredoxin (102 aa).

The region spanning 2–102 is the Thioredoxin domain; sequence VTEIRSLKQL…KTKIIDLFNN (101 aa). Residues Cys-30 and Cys-33 are joined by a disulfide bond.

Belongs to the thioredoxin family.

Participates in various redox reactions through the reversible oxidation of its active center dithiol to a disulfide and catalyzes dithiol-disulfide exchange reactions. This is Thioredoxin (trxA) from Mycoplasma genitalium (strain ATCC 33530 / DSM 19775 / NCTC 10195 / G37) (Mycoplasmoides genitalium).